The sequence spans 310 residues: 3,5-dioxohexanoate:acetyl-CoA acetone transferase (310 aa).

Zn(2+) contacts are provided by histidine 49, histidine 51, and glutamate 258.

It belongs to the BKACE family. Zn(2+) is required as a cofactor.

It catalyses the reaction 3,5-dioxohexanoate + acetyl-CoA = acetoacetyl-CoA + acetoacetate. Catalyzes the condensation of 3,5-dioxohexanoate and acetyl-CoA, forming acetoacetate and acetoacetyl-CoA. May be involved in fatty acid biosynthesis rescue via triacetic acid lactone. The polypeptide is 3,5-dioxohexanoate:acetyl-CoA acetone transferase (Paraburkholderia graminis (strain ATCC 700544 / DSM 17151 / LMG 18924 / NCIMB 13744 / C4D1M)).